Here is a 226-residue protein sequence, read N- to C-terminus: PKHD-type hydroxylase PiuC (226 aa).

Positions 78–178 constitute a Fe2OG dioxygenase domain; the sequence is KVFPPLFNCY…RYASFFWTQS (101 aa). Positions 96, 98, and 159 each coordinate Fe cation. R169 serves as a coordination point for 2-oxoglutarate.

Requires Fe(2+) as cofactor. It depends on L-ascorbate as a cofactor.

This Pseudomonas aeruginosa (strain ATCC 15692 / DSM 22644 / CIP 104116 / JCM 14847 / LMG 12228 / 1C / PRS 101 / PAO1) protein is PKHD-type hydroxylase PiuC (piuC).